The following is a 202-amino-acid chain: Apolipoprotein R (202 aa).

Positions 1–28 (MPPNLQRIFPALCLLGVLFLLHCTPVLC) are cleaved as a signal peptide. Sushi domains are found at residues 29-87 (GCDN…QCKA) and 88-145 (LCPK…KCEW). Disulfide bonds link C30/C73, C59/C85, C89/C130, and C116/C143.

As to quaternary structure, forms high molecular weight disulfide-linked complexes. In terms of tissue distribution, plasma. Found on very low-density lipoprotein (VLDL), on chylomicrons, and in the D &gt; 1.21 g/ml fraction of pig plasma. Found in liver, spleen, lung, bone marrow and lymph node.

It is found in the secreted. In terms of biological role, may be a lipoprotein-borne regulator of either the coagulation or the complement cascades. This is Apolipoprotein R (APOR) from Sus scrofa (Pig).